Consider the following 549-residue polypeptide: Elongator complex protein 3 (549 aa).

The Radical SAM core domain maps to 84 to 374 (RTASGIAVVA…YRVQRDIPMP (291 aa)). [4Fe-4S] cluster-binding residues include Cys101, Cys111, and Cys114. Acetyl-CoA is bound by residues Lys166, 476-479 (ELHV), 499-501 (FGM), and Tyr532. In terms of domain architecture, N-acetyltransferase spans 398–549 (TECRDVRTRE…EGPYMVKKLD (152 aa)).

The protein belongs to the ELP3 family. As to quaternary structure, component of the elongator complex. Interacts with transcriptional repressors snai1 and snai2; interaction with snai1 inhibits its ubiquitination and stabilizes it. It depends on [4Fe-4S] cluster as a cofactor.

It localises to the cytoplasm. Its subcellular location is the nucleus. The enzyme catalyses uridine(34) in tRNA + acetyl-CoA + S-adenosyl-L-methionine + H2O = 5-(carboxymethyl)uridine(34) in tRNA + 5'-deoxyadenosine + L-methionine + CoA + 2 H(+). It functions in the pathway tRNA modification; 5-methoxycarbonylmethyl-2-thiouridine-tRNA biosynthesis. Catalytic tRNA acetyltransferase subunit of the elongator complex which is required for multiple tRNA modifications, including mcm5U (5-methoxycarbonylmethyl uridine), mcm5s2U (5-methoxycarbonylmethyl-2-thiouridine), and ncm5U (5-carbamoylmethyl uridine). In the elongator complex, acts as a tRNA uridine(34) acetyltransferase by mediating formation of carboxymethyluridine in the wobble base at position 34 in tRNAs. Stabilizes transcriptional repressor snai1 by inhibiting its ubiquitination which promotes neural crest cell migration. The sequence is that of Elongator complex protein 3 from Xenopus tropicalis (Western clawed frog).